We begin with the raw amino-acid sequence, 931 residues long: MSEWVPNQDGLKQLVYVLNLSNSTSREVHDQIREELDKFHSVPDYNNYLTLIFKSNELQPHIRSVAGLVLKTNIKQYFEKMPREVQNYIKREILPVLSDPDASVRHTVGNIITNLIKKSCFSEWPELLPALNLALDSNSQDLIEGSLYTLSLLCEDSTKKLDSDDSGRALNQLIPKLIMFFKCNNADFRKKALVSISYFIISMPGALLINMEAFLKGIFSMSEDPSEAVRTNVCKTLVTLVETKIEFLLPYIKDVIQYMLHATKDKSEEVALEACEFWTAISQAEGCRDLLRDYLPVLVPILLNGMVYTEQDYEYLDQGDDSMTPDRPQDIKPFIASTKSHGSGSSGGGQDTGFVNPDNNNNSNNNNSSNNNSSNNNNNNNNEDDEEYNDDDDDDDDDGFEDEAWTIRKSSAFAIDVLSGIFPDAEYLSVTLPLIEQRMNEQNPWPVRESAILALGAIADGSKNGLAPHLSKVIPYLINTLNDPKPLVRSITCWTLSRYSYWIAQADGRDYLHPLVVNLLNRIVDNNKKVQEAACSAFATLEEEADLLLIPYLQMILVTFVNAFGKYQAKNLLILYDAISTLAKVVGNELNKPELINILVPPLLQKFNALDDSNKNLLPLLGCLNQVCSSIGAGLQNLISLFFNRSIKLIEGSLQAHYKYNNQDQKGSSSSSDQDFIVAALDLLQGLSEGIGTSIESLIPNSNLPHLLLQCMNLRGSDVLQSSFALLGDMSKFCLIHFKQYIPDYLNILTNNLYPEYLSVCNNASWAIGEIAIRMPDEVKPFVVAIRDRLISNINKVNLNRGVLENTAVTIGRLGIVSPADISPFVDKFIQCWCMAIRRKTDDIEKDSAFRGMWLIINNNPNGALRHLVYICDAVASWDKMQPDLYEAYFKLLHMYKTSMGGVWAQFYNQFPEQLREILNEKFKLNQDISQ.

HEAT repeat units lie at residues 10-37, 42-79, 88-121, 127-164, 171-201, 214-241, 253-280, 296-421, 430-459, 471-498, 512-545, 553-586, 594-632, 640-693, 704-735, 743-776, 784-819, 827-860, and 869-900; these read GLKQ…EELD, VPDY…QYFE, YIKR…KSCF, LLPA…LDSD, NQLI…YFII, FLKG…VTLV, KDVI…FWTA, PVLV…LSGI, VTLP…GAIA, SKVI…TLSR, LHPL…EEEA, LQMI…AKVV, ELIN…SSIG, SLFF…GIGT, LPHL…KFCL, PDYL…IRMP, VAIR…IVSP, DKFI…INNN, and VYIC…KTSM. Positions 32-99 constitute an Importin N-terminal domain; that stretch reads IREELDKFHS…KREILPVLSD (68 aa). The interval 317-401 is disordered; sequence DQGDDSMTPD…DDDDDDDGFE (85 aa). Positions 358–381 are enriched in low complexity; sequence DNNNNSNNNNSSNNNSSNNNNNNN. Over residues 382–401 the composition is skewed to acidic residues; that stretch reads NEDDEEYNDDDDDDDDDGFE.

This sequence belongs to the importin beta family. Importin beta-2 subfamily. Forms a complex with an importin alpha subunit.

The protein localises to the cytoplasm. The protein resides in the nucleus envelope. Its function is as follows. Functions in nuclear protein import via a substrate-importin alpha-beta transport complex that passes though the nuclear pore complexes (NPC). Mediates docking of the substrate-importin complex to distinct nucleoporins. The chain is Transportin (tnpo) from Dictyostelium discoideum (Social amoeba).